The following is a 332-amino-acid chain: Putative D-threonate 4-phosphate dehydrogenase (332 aa).

Residues H140 and T141 each coordinate substrate. Residues H170, H214, and H270 each contribute to the a divalent metal cation site. The substrate site is built by K278, N287, and R296.

It belongs to the PdxA family. PdxA2 subfamily. In terms of assembly, homodimer. A divalent metal cation serves as cofactor.

The catalysed reaction is 4-O-phospho-D-threonate + NAD(+) = dihydroxyacetone phosphate + CO2 + NADH. Its function is as follows. Catalyzes the NAD-dependent oxidation and subsequent decarboxylation of D-threonate 4-phosphate to produce dihydroxyacetone phosphate (DHAP). The chain is Putative D-threonate 4-phosphate dehydrogenase from Oceanobacillus iheyensis (strain DSM 14371 / CIP 107618 / JCM 11309 / KCTC 3954 / HTE831).